Consider the following 590-residue polypeptide: MQRALSSTSRASVLSSAPTRAPVSRFRSAGLSLQQQRFAHKELKFGVEGRAALLKGIDTLAKAVCTTLGPKGRNVLIESSYGSPKITKDGVTVAKAVTLQDKFENLGARLLQDVASKTNEVAGDGTTTATVLARAIFSETVKNVAAGCNPMDLRRGIQAAVEAVVEYLQANKRDITTTEEIAQVATISANGDTHVGKLISNAMEKVGKEGVITVKDGKTIEDELEVTEGMRFDRGYVSPYFITDTKAQKVEFEKPLIVLSEKKISAVQDIIPALEASTTLRRPLVIIAEDIEGEALAVCILNKLRGQLQVAAVKVPGFGDNRKSILGDIGILTNATVFTDELDMKLEKATADMLGSTGSITITKEDTIILNGDGSKDSIAQRCEQIRGVIADPTTSDYEKEKLQERLAKLSGGVAVIKVGGASEVEVGEKKDRVVDALNATRAAVEEGILPGGGTALLKAAANGLASVKPTSSDQLRRISSLVSAITRPARTIVENAGLEGSVIVGKLTDEHASDFNRGFDSAKGEYVDMIASGIVDPLKVVRTALVDASGVASLLGTTEVAIVEAPEEKGPAGPPGGMGGMGGMGGGMF.

The transit peptide at 1–43 directs the protein to the mitochondrion; sequence MQRALSSTSRASVLSSAPTRAPVSRFRSAGLSLQQQRFAHKEL.

It belongs to the chaperonin (HSP60) family.

Its subcellular location is the mitochondrion. May participate in assembly and/or disassembly of proteins imported into the mitochondrion. HSP60 are ATPases and have affinity for unfolded proteins. The protein is Heat shock protein 60, mitochondrial (HSP60) of Ajellomyces capsulatus (Darling's disease fungus).